The following is a 230-amino-acid chain: N-(5'-phosphoribosyl)anthranilate isomerase (230 aa).

This sequence belongs to the TrpF family.

The enzyme catalyses N-(5-phospho-beta-D-ribosyl)anthranilate = 1-(2-carboxyphenylamino)-1-deoxy-D-ribulose 5-phosphate. Its pathway is amino-acid biosynthesis; L-tryptophan biosynthesis; L-tryptophan from chorismate: step 3/5. The sequence is that of N-(5'-phosphoribosyl)anthranilate isomerase from Syntrophus aciditrophicus (strain SB).